The chain runs to 870 residues: Valine--tRNA ligase (870 aa).

The 'HIGH' region motif lies at 42–52 (PNVTGVLHIGH). The 'KMSKS' region motif lies at 527-531 (KMSKS). Lys-530 lines the ATP pocket. A coiled-coil region spans residues 800 to 870 (LENVDLSGIL…ISVELQNLRG (71 aa)).

This sequence belongs to the class-I aminoacyl-tRNA synthetase family. ValS type 1 subfamily. As to quaternary structure, monomer.

The protein localises to the cytoplasm. It catalyses the reaction tRNA(Val) + L-valine + ATP = L-valyl-tRNA(Val) + AMP + diphosphate. Functionally, catalyzes the attachment of valine to tRNA(Val). As ValRS can inadvertently accommodate and process structurally similar amino acids such as threonine, to avoid such errors, it has a 'posttransfer' editing activity that hydrolyzes mischarged Thr-tRNA(Val) in a tRNA-dependent manner. This Campylobacter jejuni (strain RM1221) protein is Valine--tRNA ligase.